A 250-amino-acid polypeptide reads, in one-letter code: Probable septum site-determining protein MinC (250 aa).

A disordered region spans residues 110-143 (SGARERPLEPEPEVVKKPEPAPAPPPPPEPEVRP). Over residues 112-128 (ARERPLEPEPEVVKKPE) the composition is skewed to basic and acidic residues. The segment covering 129–138 (PAPAPPPPPE) has biased composition (pro residues).

Belongs to the MinC family. Interacts with MinD and FtsZ.

In terms of biological role, cell division inhibitor that blocks the formation of polar Z ring septums. Rapidly oscillates between the poles of the cell to destabilize FtsZ filaments that have formed before they mature into polar Z rings. Prevents FtsZ polymerization. The sequence is that of Probable septum site-determining protein MinC from Pseudomonas putida (strain ATCC 47054 / DSM 6125 / CFBP 8728 / NCIMB 11950 / KT2440).